A 240-amino-acid chain; its full sequence is Cysteine-rich secretory protein (240 aa).

An N-terminal signal peptide occupies residues 1–19 (MIAFIVLPILAAVLQQSSG). The 129-residue stretch at 38–166 (VDLHNSLRRS…EYSYFYVCQY (129 aa)) folds into the SCP domain. Cystine bridges form between cysteine 75–cysteine 153, cysteine 92–cysteine 167, cysteine 148–cysteine 164, cysteine 186–cysteine 193, cysteine 189–cysteine 198, cysteine 202–cysteine 235, cysteine 211–cysteine 229, and cysteine 220–cysteine 233. A ShKT domain is found at 202 to 235 (CTKEDKYSNCKSLVQQAGCQDKQMQSDCSAICFC).

This sequence belongs to the CRISP family. In terms of tissue distribution, expressed by the venom gland.

The protein localises to the secreted. Functionally, weakly blocks contraction of smooth muscle elicited by high potassium-induced depolarization, but does not block caffeine-stimulated contraction. May target voltage-gated calcium channels on smooth muscle. This Crotalus adamanteus (Eastern diamondback rattlesnake) protein is Cysteine-rich secretory protein.